The chain runs to 273 residues: Shikimate dehydrogenase (NADP(+)) (273 aa).

Shikimate is bound by residues 14–16 (SKS) and Thr-61. Residue Lys-65 is the Proton acceptor of the active site. 2 residues coordinate shikimate: Asn-86 and Asp-102. NADP(+) contacts are provided by residues 126 to 130 (GAGGA), 150 to 155 (NRTVAK), and Met-213. Residue Tyr-215 coordinates shikimate. Gly-237 is an NADP(+) binding site.

The protein belongs to the shikimate dehydrogenase family. In terms of assembly, homodimer.

It carries out the reaction shikimate + NADP(+) = 3-dehydroshikimate + NADPH + H(+). It functions in the pathway metabolic intermediate biosynthesis; chorismate biosynthesis; chorismate from D-erythrose 4-phosphate and phosphoenolpyruvate: step 4/7. In terms of biological role, involved in the biosynthesis of the chorismate, which leads to the biosynthesis of aromatic amino acids. Catalyzes the reversible NADPH linked reduction of 3-dehydroshikimate (DHSA) to yield shikimate (SA). The polypeptide is Shikimate dehydrogenase (NADP(+)) (Tolumonas auensis (strain DSM 9187 / NBRC 110442 / TA 4)).